Reading from the N-terminus, the 620-residue chain is Chaperone protein HscA homolog (620 aa).

It belongs to the heat shock protein 70 family.

In terms of biological role, chaperone involved in the maturation of iron-sulfur cluster-containing proteins. Has a low intrinsic ATPase activity which is markedly stimulated by HscB. This chain is Chaperone protein HscA homolog, found in Pseudomonas fluorescens (strain ATCC BAA-477 / NRRL B-23932 / Pf-5).